A 514-amino-acid polypeptide reads, in one-letter code: MNEEQRKASSVDVLAERDKKAEKDYSKYFEHVYQPPNLKEAKKRGKQEVRYNRDFQIDEKYRGMGNERTFLIKTYGCQMNAHDTEVIAGILEALGYQATTDINTADVILINTCAIRENAENKVFSEIGNLKHLKKERPDILIGVCGCMSQEESVVNKILKSYQNVDMIFGTHNIHHLPEILEEAYLSKAMVVEVWSKEGDVIENLPKVREGNIKAWVNIMYGCDKFCTYCIVPFTRGKERSRRPEDIIDEVRELAREGYKEITLLGQNVNSYGKDLQDIEYDLGDLLQAISKIAIPRVRFTTSHPWDFTDHMIDVISEGGNIVPHIHLPVQSGNNAVLKIMGRKYTRESYLDLVKRIKDRIPNVALTTDIIVGYPNESEEQFEETLTLYDEVGFEHAYTYLYSQRDGTPAAKMKDNVPLNVKKERLQRLNKKVGHYSQIAMSKYEGQTVTVLCEGSSKKDDQVLAGYTDKNKLVNFKAPKEMIGKLVEVRIDEAKQYSLNGSFVKEVEPEMVIQ.

The tract at residues 1-21 (MNEEQRKASSVDVLAERDKKA) is disordered. The 119-residue stretch at 68-186 (RTFLIKTYGC…LPEILEEAYL (119 aa)) folds into the MTTase N-terminal domain. [4Fe-4S] cluster-binding residues include cysteine 77, cysteine 113, cysteine 147, cysteine 223, cysteine 227, and cysteine 230. Residues 209–440 (REGNIKAWVN…KKVGHYSQIA (232 aa)) enclose the Radical SAM core domain. The region spanning 442 to 505 (SKYEGQTVTV…QYSLNGSFVK (64 aa)) is the TRAM domain.

It belongs to the methylthiotransferase family. MiaB subfamily. In terms of assembly, monomer. Requires [4Fe-4S] cluster as cofactor.

The protein resides in the cytoplasm. It catalyses the reaction N(6)-dimethylallyladenosine(37) in tRNA + (sulfur carrier)-SH + AH2 + 2 S-adenosyl-L-methionine = 2-methylsulfanyl-N(6)-dimethylallyladenosine(37) in tRNA + (sulfur carrier)-H + 5'-deoxyadenosine + L-methionine + A + S-adenosyl-L-homocysteine + 2 H(+). Catalyzes the methylthiolation of N6-(dimethylallyl)adenosine (i(6)A), leading to the formation of 2-methylthio-N6-(dimethylallyl)adenosine (ms(2)i(6)A) at position 37 in tRNAs that read codons beginning with uridine. The sequence is that of tRNA-2-methylthio-N(6)-dimethylallyladenosine synthase from Staphylococcus aureus (strain N315).